A 193-amino-acid polypeptide reads, in one-letter code: Molybdenum cofactor guanylyltransferase (193 aa).

GTP is bound by residues 8 to 10, Lys-21, Asp-67, and Asp-98; that span reads LAG. A Mg(2+)-binding site is contributed by Asp-98.

It belongs to the MobA family. Monomer. Mg(2+) serves as cofactor.

The protein resides in the cytoplasm. It catalyses the reaction Mo-molybdopterin + GTP + H(+) = Mo-molybdopterin guanine dinucleotide + diphosphate. Transfers a GMP moiety from GTP to Mo-molybdopterin (Mo-MPT) cofactor (Moco or molybdenum cofactor) to form Mo-molybdopterin guanine dinucleotide (Mo-MGD) cofactor. This is Molybdenum cofactor guanylyltransferase from Cereibacter sphaeroides (strain ATCC 17029 / ATH 2.4.9) (Rhodobacter sphaeroides).